The sequence spans 124 residues: Heat-labile enterotoxin B chain (124 aa).

An N-terminal signal peptide occupies residues 1 to 21 (MNKVKCYVLFTALLSSLCAYG). An intrachain disulfide couples Cys-30 to Cys-107.

As to quaternary structure, heterohexamer of one A chain and of five B chains.

In terms of biological role, the biological activity of the toxin is produced by the A chain, which activates intracellular adenyl cyclase. The protein is Heat-labile enterotoxin B chain (eltB) of Escherichia coli O78:H11 (strain H10407 / ETEC).